Consider the following 206-residue polypeptide: Small ribosomal subunit protein uS4 (206 aa).

Residues 96-158 enclose the S4 RNA-binding domain; sequence SRLDNVVYRM…AKKQLRIQNA (63 aa).

This sequence belongs to the universal ribosomal protein uS4 family. As to quaternary structure, part of the 30S ribosomal subunit. Contacts protein S5. The interaction surface between S4 and S5 is involved in control of translational fidelity.

One of the primary rRNA binding proteins, it binds directly to 16S rRNA where it nucleates assembly of the body of the 30S subunit. Its function is as follows. With S5 and S12 plays an important role in translational accuracy. This chain is Small ribosomal subunit protein uS4, found in Francisella tularensis subsp. tularensis (strain FSC 198).